Consider the following 287-residue polypeptide: 4-hydroxybenzoate octaprenyltransferase (287 aa).

6 helical membrane passes run 23-40 (IGSL…WLAG), 98-118 (ILFV…NKMT), 141-161 (LPQF…YAAV), 163-183 (ESLP…TVAY), 213-233 (IIIG…GNIT), and 235-255 (LGIP…YQQI).

It belongs to the UbiA prenyltransferase family. Requires Mg(2+) as cofactor.

The protein resides in the cell inner membrane. The enzyme catalyses all-trans-octaprenyl diphosphate + 4-hydroxybenzoate = 4-hydroxy-3-(all-trans-octaprenyl)benzoate + diphosphate. It functions in the pathway cofactor biosynthesis; ubiquinone biosynthesis. Catalyzes the prenylation of para-hydroxybenzoate (PHB) with an all-trans polyprenyl group. Mediates the second step in the final reaction sequence of ubiquinone-8 (UQ-8) biosynthesis, which is the condensation of the polyisoprenoid side chain with PHB, generating the first membrane-bound Q intermediate 3-octaprenyl-4-hydroxybenzoate. The sequence is that of 4-hydroxybenzoate octaprenyltransferase from Pectobacterium atrosepticum (strain SCRI 1043 / ATCC BAA-672) (Erwinia carotovora subsp. atroseptica).